A 508-amino-acid polypeptide reads, in one-letter code: Photosystem II CP47 reaction center protein (508 aa).

The next 6 membrane-spanning stretches (helical) occupy residues 21 to 36 (SVHI…WAGS), 101 to 115 (IVFS…IWHW), 140 to 156 (GIHL…FGAF), 203 to 218 (IAAG…FHLS), 237 to 252 (VLSS…AFVV), and 457 to 472 (SFAL…HGSR).

This sequence belongs to the PsbB/PsbC family. PsbB subfamily. As to quaternary structure, PSII is composed of 1 copy each of membrane proteins PsbA, PsbB, PsbC, PsbD, PsbE, PsbF, PsbH, PsbI, PsbJ, PsbK, PsbL, PsbM, PsbT, PsbX, PsbY, PsbZ, Psb30/Ycf12, at least 3 peripheral proteins of the oxygen-evolving complex and a large number of cofactors. It forms dimeric complexes. The cofactor is Binds multiple chlorophylls. PSII binds additional chlorophylls, carotenoids and specific lipids..

Its subcellular location is the plastid. The protein resides in the chloroplast thylakoid membrane. In terms of biological role, one of the components of the core complex of photosystem II (PSII). It binds chlorophyll and helps catalyze the primary light-induced photochemical processes of PSII. PSII is a light-driven water:plastoquinone oxidoreductase, using light energy to abstract electrons from H(2)O, generating O(2) and a proton gradient subsequently used for ATP formation. The chain is Photosystem II CP47 reaction center protein from Capsella bursa-pastoris (Shepherd's purse).